Here is a 230-residue protein sequence, read N- to C-terminus: Large ribosomal subunit protein uL1 (230 aa).

Belongs to the universal ribosomal protein uL1 family. In terms of assembly, part of the 50S ribosomal subunit.

Its function is as follows. Binds directly to 23S rRNA. The L1 stalk is quite mobile in the ribosome, and is involved in E site tRNA release. Protein L1 is also a translational repressor protein, it controls the translation of the L11 operon by binding to its mRNA. In Staphylococcus aureus (strain Mu3 / ATCC 700698), this protein is Large ribosomal subunit protein uL1.